We begin with the raw amino-acid sequence, 398 residues long: Succinate--CoA ligase [ADP-forming] subunit beta (398 aa).

Residues 9-254 (KRLLHEYGAP…LSEEDPKEIE (246 aa)) enclose the ATP-grasp domain. ATP-binding positions include K46, 53 to 55 (GRG), E109, A112, and E117. Mg(2+) contacts are provided by N209 and D223. Substrate contacts are provided by residues N274 and 331–333 (GIM).

The protein belongs to the succinate/malate CoA ligase beta subunit family. In terms of assembly, heterotetramer of two alpha and two beta subunits. Mg(2+) is required as a cofactor.

The catalysed reaction is succinate + ATP + CoA = succinyl-CoA + ADP + phosphate. It carries out the reaction GTP + succinate + CoA = succinyl-CoA + GDP + phosphate. Its pathway is carbohydrate metabolism; tricarboxylic acid cycle; succinate from succinyl-CoA (ligase route): step 1/1. Succinyl-CoA synthetase functions in the citric acid cycle (TCA), coupling the hydrolysis of succinyl-CoA to the synthesis of either ATP or GTP and thus represents the only step of substrate-level phosphorylation in the TCA. The beta subunit provides nucleotide specificity of the enzyme and binds the substrate succinate, while the binding sites for coenzyme A and phosphate are found in the alpha subunit. This Bartonella quintana (strain Toulouse) (Rochalimaea quintana) protein is Succinate--CoA ligase [ADP-forming] subunit beta.